The primary structure comprises 392 residues: Formate-dependent phosphoribosylglycinamide formyltransferase (392 aa).

Residues 22–23 and glutamate 82 contribute to the N(1)-(5-phospho-beta-D-ribosyl)glycinamide site; that span reads EL. ATP is bound by residues arginine 114, lysine 155, 160–165, 195–198, and glutamate 203; these read SSGKGQ and EGVV. The region spanning 119 to 308 is the ATP-grasp domain; the sequence is RLAAEELQLP…EFALHVRAFL (190 aa). Positions 267 and 279 each coordinate Mg(2+). N(1)-(5-phospho-beta-D-ribosyl)glycinamide contacts are provided by residues aspartate 286, lysine 355, and 362–363; that span reads RR.

This sequence belongs to the PurK/PurT family. Homodimer.

The enzyme catalyses N(1)-(5-phospho-beta-D-ribosyl)glycinamide + formate + ATP = N(2)-formyl-N(1)-(5-phospho-beta-D-ribosyl)glycinamide + ADP + phosphate + H(+). The protein operates within purine metabolism; IMP biosynthesis via de novo pathway; N(2)-formyl-N(1)-(5-phospho-D-ribosyl)glycinamide from N(1)-(5-phospho-D-ribosyl)glycinamide (formate route): step 1/1. Its function is as follows. Involved in the de novo purine biosynthesis. Catalyzes the transfer of formate to 5-phospho-ribosyl-glycinamide (GAR), producing 5-phospho-ribosyl-N-formylglycinamide (FGAR). Formate is provided by PurU via hydrolysis of 10-formyl-tetrahydrofolate. This is Formate-dependent phosphoribosylglycinamide formyltransferase from Escherichia coli O157:H7.